A 124-amino-acid polypeptide reads, in one-letter code: Large ribosomal subunit protein bL12 (124 aa).

This sequence belongs to the bacterial ribosomal protein bL12 family. In terms of assembly, homodimer. Part of the ribosomal stalk of the 50S ribosomal subunit. Forms a multimeric L10(L12)X complex, where L10 forms an elongated spine to which 2 to 4 L12 dimers bind in a sequential fashion. Binds GTP-bound translation factors.

Its function is as follows. Forms part of the ribosomal stalk which helps the ribosome interact with GTP-bound translation factors. Is thus essential for accurate translation. In Bacteroides fragilis (strain ATCC 25285 / DSM 2151 / CCUG 4856 / JCM 11019 / LMG 10263 / NCTC 9343 / Onslow / VPI 2553 / EN-2), this protein is Large ribosomal subunit protein bL12.